Consider the following 601-residue polypeptide: A-type ATP synthase subunit A (601 aa).

Position 235 to 242 (235 to 242) interacts with ATP; it reads GGFGTGKT.

It belongs to the ATPase alpha/beta chains family. Has multiple subunits with at least A(3), B(3), C, D, E, F, H, I and proteolipid K(x).

The protein localises to the cell membrane. The catalysed reaction is ATP + H2O + 4 H(+)(in) = ADP + phosphate + 5 H(+)(out). In terms of biological role, component of the A-type ATP synthase that produces ATP from ADP in the presence of a proton gradient across the membrane. The A chain is the catalytic subunit. The sequence is that of A-type ATP synthase subunit A from Thermofilum pendens (strain DSM 2475 / Hrk 5).